The following is a 404-amino-acid chain: Ammonium transporter (404 aa).

A run of 9 helical transmembrane segments spans residues 7–27 (VFMF…ALFY), 44–64 (FSSI…LAFA), 96–116 (LFMM…SGAF), 125–145 (FLLF…HWVW), 158–178 (FAGG…LAIV), 227–247 (INTN…EWII), 254–274 (LGAV…AGFV), 277–297 (FASI…VFSL), and 352–372 (IVAI…IIKI).

The protein belongs to the ammonia transporter channel (TC 1.A.11.2) family. In terms of assembly, interacts with NrgB for a correct localization of the latter. GlnK-AmtB complex interacts with TnrA.

The protein resides in the cell membrane. In terms of biological role, functions as an ammonium and methylammonium transporter in the absence of glutamine. Required for ammonium utilization at low concentrations or at low pH values, when ammonium is the single nitrogen source. Required for binding of NrgB to the membrane. Interaction between GlnK-AmtB complex and TnrA protects TnrA from proteolytic degradation. In Bacillus subtilis (strain 168), this protein is Ammonium transporter.